We begin with the raw amino-acid sequence, 296 residues long: tRNA dimethylallyltransferase (296 aa).

8–15 (GPTGSGKT) is a binding site for ATP. 10 to 15 (TGSGKT) contributes to the substrate binding site. An interaction with substrate tRNA region spans residues 32-35 (DSRQ).

The protein belongs to the IPP transferase family. In terms of assembly, monomer. It depends on Mg(2+) as a cofactor.

The enzyme catalyses adenosine(37) in tRNA + dimethylallyl diphosphate = N(6)-dimethylallyladenosine(37) in tRNA + diphosphate. Functionally, catalyzes the transfer of a dimethylallyl group onto the adenine at position 37 in tRNAs that read codons beginning with uridine, leading to the formation of N6-(dimethylallyl)adenosine (i(6)A). This chain is tRNA dimethylallyltransferase, found in Leptospira biflexa serovar Patoc (strain Patoc 1 / Ames).